Consider the following 224-residue polypeptide: Protein-L-isoaspartate O-methyltransferase (224 aa).

The active site involves S63.

It belongs to the methyltransferase superfamily. L-isoaspartyl/D-aspartyl protein methyltransferase family.

It is found in the cytoplasm. The enzyme catalyses [protein]-L-isoaspartate + S-adenosyl-L-methionine = [protein]-L-isoaspartate alpha-methyl ester + S-adenosyl-L-homocysteine. Catalyzes the methyl esterification of L-isoaspartyl residues in peptides and proteins that result from spontaneous decomposition of normal L-aspartyl and L-asparaginyl residues. It plays a role in the repair and/or degradation of damaged proteins. This chain is Protein-L-isoaspartate O-methyltransferase, found in Herpetosiphon aurantiacus (strain ATCC 23779 / DSM 785 / 114-95).